An 86-amino-acid polypeptide reads, in one-letter code: Protein Vpu (86 aa).

Residues 1–12 are Extracellular-facing; the sequence is MLELIGRIDYRL. The helical transmembrane segment at 13-33 threads the bilayer; the sequence is GVGALIVALIIVIIVWTIAYI. Residues 34–86 are Cytoplasmic-facing; sequence EYRKLVRQRRIDWLVKRIKERAEDSGNESGGDTEELETMVDMGHLRLLDGNDL. 2 positions are modified to phosphoserine; by host CK2: serine 58 and serine 62.

The protein belongs to the HIV-1 VPU protein family. In terms of assembly, homopentamer. Interacts with host CD4 and BRTC; these interactions induce proteasomal degradation of CD4. Interacts with host BST2; this interaction leads to the degradation of host BST2. Interacts with host FBXW11. Interacts with host AP1M1; this interaction plays a role in the mistrafficking and subsequent degradation of host BST2. Interacts with host RANBP2; this interaction allows Vpu to down-regulate host BLM sumoylation. In terms of processing, phosphorylated by host CK2. This phosphorylation is necessary for interaction with human BTRC and degradation of CD4.

It localises to the host membrane. Ion channel activity is inhibited by hexamethylene amiloride in vitro. In terms of biological role, enhances virion budding, by targeting human CD4 and Tetherin/BST2 to proteasome degradation. Degradation of CD4 prevents any unwanted premature interactions between viral Env and its host receptor CD4 in the endoplasmic reticulum. Degradation of antiretroviral protein Tetherin/BST2 is important for virion budding, as BST2 tethers new viral particles to the host cell membrane. Mechanistically, Vpu bridges either CD4 or BST2 to BTRC, a substrate recognition subunit of the Skp1/Cullin/F-box protein E3 ubiquitin ligase, induces their ubiquitination and subsequent proteasomal degradation. The alteration of the E3 ligase specificity by Vpu seems to promote the degradation of host IKBKB, leading to NF-kappa-B down-regulation and subsequent apoptosis. Acts as a viroporin that forms an oligomeric ion channel in membranes. Modulates the host DNA repair mechanisms to promote degradation of nuclear viral cDNA in cells that are already productively infected in order to suppress immune sensing and proviral hyper-integration (superinfection). Manipulates PML-NBs and modulates SUMOylation of host BLM protein thereby enhancing its DNA-end processing activity toward viral unintegrated linear DNA. Also inhibits RAD52-mediated homologous repair of viral cDNA, preventing the generation of dead-end circular forms of single copies of the long terminal repeat and permitting sustained nucleolytic attack. In Homo sapiens (Human), this protein is Protein Vpu.